The following is a 403-amino-acid chain: Pantothenate kinase (403 aa).

3 positions are modified to phosphoserine: Ser80, Ser82, and Ser84.

Belongs to the type II pantothenate kinase family.

The protein resides in the cytoplasm. It is found in the nucleus. It catalyses the reaction (R)-pantothenate + ATP = (R)-4'-phosphopantothenate + ADP + H(+). Its pathway is cofactor biosynthesis; coenzyme A biosynthesis; CoA from (R)-pantothenate: step 1/5. Regulated by feedback inhibition by malonyl-CoA. Functionally, plays a role in the physiological regulation of the intracellular CoA concentration. The chain is Pantothenate kinase from Schizosaccharomyces pombe (strain 972 / ATCC 24843) (Fission yeast).